A 193-amino-acid polypeptide reads, in one-letter code: Dual-action ribosomal maturation protein DarP (193 aa).

A compositionally biased stretch (basic and acidic residues) spans Met-1 to Glu-10. Disordered regions lie at residues Met-1 to Arg-20 and Ser-170 to Glu-193. Over residues Gly-181–Glu-193 the composition is skewed to acidic residues.

This sequence belongs to the DarP family.

It is found in the cytoplasm. Its function is as follows. Member of a network of 50S ribosomal subunit biogenesis factors which assembles along the 30S-50S interface, preventing incorrect 23S rRNA structures from forming. Promotes peptidyl transferase center (PTC) maturation. This Xanthomonas campestris pv. campestris (strain 8004) protein is Dual-action ribosomal maturation protein DarP.